The chain runs to 193 residues: Zinc finger protein AZF3 (193 aa).

2 C2H2-type zinc fingers span residues Tyr-75 to His-97 and His-118 to His-140.

As to expression, expressed in roots.

It is found in the nucleus. Transcriptional repressor probably involved in abiotic stress responses. Binds DNA in a sequence-specific manner and can repress the transactivation activity of other transcription factors. The chain is Zinc finger protein AZF3 (AZF3) from Arabidopsis thaliana (Mouse-ear cress).